A 135-amino-acid polypeptide reads, in one-letter code: UPF0102 protein PGN_1801 (135 aa).

The protein belongs to the UPF0102 family.

This Porphyromonas gingivalis (strain ATCC 33277 / DSM 20709 / CIP 103683 / JCM 12257 / NCTC 11834 / 2561) protein is UPF0102 protein PGN_1801.